A 299-amino-acid polypeptide reads, in one-letter code: METVNNNLQQFLHFQKVERGLSNNTIQSYGRDLKQYIQYVERVEEIRSARNITRETILHYLYHLREQGRAETSIARAVAAIRSFHQFLLREKLSDSDPTVHVEIPKATKRLPKALTIEEVEALLNSPQGRDPFSLRNKAMLELLYATGMRVSELIGLTLSDIHLSMGFVRCLGKGNKERIIPIGQVATEAVESYLANGRGKLMKKQSHDHVFVNHHGRPLSRQGFWKMLKQLAKNVNIDKPLTPHTLRHSFATHLLENGADLRAVQEMLGHADISTTQIYTHVTKTRMRDVYAHFHPRA.

Residues 2 to 89 form the Core-binding (CB) domain; that stretch reads ETVNNNLQQF…AIRSFHQFLL (88 aa). Residues 110–293 enclose the Tyr recombinase domain; it reads RLPKALTIEE…TKTRMRDVYA (184 aa). Catalysis depends on residues Arg-150, Lys-174, His-245, Arg-248, and His-271. Tyr-280 functions as the O-(3'-phospho-DNA)-tyrosine intermediate in the catalytic mechanism.

Belongs to the 'phage' integrase family. XerD subfamily. In terms of assembly, forms a cyclic heterotetrameric complex composed of two molecules of XerC and two molecules of XerD.

The protein localises to the cytoplasm. In terms of biological role, site-specific tyrosine recombinase, which acts by catalyzing the cutting and rejoining of the recombining DNA molecules. The XerC-XerD complex is essential to convert dimers of the bacterial chromosome into monomers to permit their segregation at cell division. It also contributes to the segregational stability of plasmids. This is Tyrosine recombinase XerD from Halalkalibacterium halodurans (strain ATCC BAA-125 / DSM 18197 / FERM 7344 / JCM 9153 / C-125) (Bacillus halodurans).